The chain runs to 245 residues: Uroporphyrinogen-III C-methyltransferase (245 aa).

Residues P12, 87–89 (GGD), 117–118 (TA), M168, A197, and A225 contribute to the S-adenosyl-L-homocysteine site.

This sequence belongs to the precorrin methyltransferase family.

The catalysed reaction is uroporphyrinogen III + 2 S-adenosyl-L-methionine = precorrin-2 + 2 S-adenosyl-L-homocysteine + H(+). The protein operates within cofactor biosynthesis; adenosylcobalamin biosynthesis; precorrin-2 from uroporphyrinogen III: step 1/1. Its pathway is porphyrin-containing compound metabolism; siroheme biosynthesis; precorrin-2 from uroporphyrinogen III: step 1/1. Catalyzes the two successive C-2 and C-7 methylation reactions involved in the conversion of uroporphyrinogen III to precorrin-2 via the intermediate formation of precorrin-1. It is a step in the biosynthesis of both cobalamin (vitamin B12) and siroheme. The sequence is that of Uroporphyrinogen-III C-methyltransferase (cobA) from Pseudomonas aeruginosa (strain ATCC 15692 / DSM 22644 / CIP 104116 / JCM 14847 / LMG 12228 / 1C / PRS 101 / PAO1).